Consider the following 356-residue polypeptide: tRNA-specific 2-thiouridylase MnmA (356 aa).

ATP is bound by residues 6–13 (GMSGGVDS) and Leu32. Catalysis depends on Cys102, which acts as the Nucleophile. A disulfide bridge connects residues Cys102 and Cys200. Gly127 is a binding site for ATP. The interaction with tRNA stretch occupies residues 150-152 (RDQ). Cys200 functions as the Cysteine persulfide intermediate in the catalytic mechanism. Positions 302 to 303 (RY) are interaction with tRNA.

Belongs to the MnmA/TRMU family.

It localises to the cytoplasm. It carries out the reaction S-sulfanyl-L-cysteinyl-[protein] + uridine(34) in tRNA + AH2 + ATP = 2-thiouridine(34) in tRNA + L-cysteinyl-[protein] + A + AMP + diphosphate + H(+). In terms of biological role, catalyzes the 2-thiolation of uridine at the wobble position (U34) of tRNA, leading to the formation of s(2)U34. The polypeptide is tRNA-specific 2-thiouridylase MnmA (Aquifex aeolicus (strain VF5)).